A 241-amino-acid chain; its full sequence is FKBP-type peptidyl-prolyl cis-trans isomerase FkpA (241 aa).

Positions 153 to 241 constitute a PPIase FKBP-type domain; it reads ETKITVHYKG…IELLDVVNGV (89 aa).

Belongs to the FKBP-type PPIase family.

It catalyses the reaction [protein]-peptidylproline (omega=180) = [protein]-peptidylproline (omega=0). PPIases accelerate the folding of proteins. It catalyzes the cis-trans isomerization of proline imidic peptide bonds in oligopeptides. The chain is FKBP-type peptidyl-prolyl cis-trans isomerase FkpA (fkpA) from Buchnera aphidicola subsp. Acyrthosiphon pisum (strain APS) (Acyrthosiphon pisum symbiotic bacterium).